Reading from the N-terminus, the 156-residue chain is SPbeta prophage-derived uncharacterized protein YorH (156 aa).

The chain is SPbeta prophage-derived uncharacterized protein YorH (yorH) from Bacillus subtilis (strain 168).